Consider the following 366-residue polypeptide: tRNA/tmRNA (uracil-C(5))-methyltransferase (366 aa).

Residues Q189, Y217, N222, E238, and D298 each contribute to the S-adenosyl-L-methionine site. The Nucleophile role is filled by C323. E357 serves as the catalytic Proton acceptor.

This sequence belongs to the class I-like SAM-binding methyltransferase superfamily. RNA M5U methyltransferase family. TrmA subfamily.

It catalyses the reaction uridine(54) in tRNA + S-adenosyl-L-methionine = 5-methyluridine(54) in tRNA + S-adenosyl-L-homocysteine + H(+). It carries out the reaction uridine(341) in tmRNA + S-adenosyl-L-methionine = 5-methyluridine(341) in tmRNA + S-adenosyl-L-homocysteine + H(+). Its function is as follows. Dual-specificity methyltransferase that catalyzes the formation of 5-methyluridine at position 54 (m5U54) in all tRNAs, and that of position 341 (m5U341) in tmRNA (transfer-mRNA). The protein is tRNA/tmRNA (uracil-C(5))-methyltransferase of Idiomarina loihiensis (strain ATCC BAA-735 / DSM 15497 / L2-TR).